Reading from the N-terminus, the 434-residue chain is Enolase (434 aa).

Glutamine 163 lines the (2R)-2-phosphoglycerate pocket. Glutamate 205 acts as the Proton donor in catalysis. Mg(2+)-binding residues include aspartate 242, glutamate 289, and aspartate 316. 4 residues coordinate (2R)-2-phosphoglycerate: lysine 341, arginine 370, serine 371, and lysine 392. Lysine 341 (proton acceptor) is an active-site residue.

This sequence belongs to the enolase family. Mg(2+) serves as cofactor.

The protein localises to the cytoplasm. Its subcellular location is the secreted. It is found in the cell surface. It catalyses the reaction (2R)-2-phosphoglycerate = phosphoenolpyruvate + H2O. The protein operates within carbohydrate degradation; glycolysis; pyruvate from D-glyceraldehyde 3-phosphate: step 4/5. In terms of biological role, catalyzes the reversible conversion of 2-phosphoglycerate (2-PG) into phosphoenolpyruvate (PEP). It is essential for the degradation of carbohydrates via glycolysis. This chain is Enolase, found in Lacticaseibacillus casei (strain BL23) (Lactobacillus casei).